Reading from the N-terminus, the 208-residue chain is Molybdenum cofactor guanylyltransferase (208 aa).

GTP is bound by residues Leu-10–Gly-12, Lys-23, Asp-69, and Asp-103. Residue Asp-103 participates in Mg(2+) binding.

The protein belongs to the MobA family. As to quaternary structure, monomer. Requires Mg(2+) as cofactor.

The protein localises to the cytoplasm. It carries out the reaction Mo-molybdopterin + GTP + H(+) = Mo-molybdopterin guanine dinucleotide + diphosphate. In terms of biological role, transfers a GMP moiety from GTP to Mo-molybdopterin (Mo-MPT) cofactor (Moco or molybdenum cofactor) to form Mo-molybdopterin guanine dinucleotide (Mo-MGD) cofactor. This is Molybdenum cofactor guanylyltransferase from Mesorhizobium japonicum (strain LMG 29417 / CECT 9101 / MAFF 303099) (Mesorhizobium loti (strain MAFF 303099)).